The following is a 316-amino-acid chain: Transaldolase B (316 aa).

Residue lysine 131 is the Schiff-base intermediate with substrate of the active site.

This sequence belongs to the transaldolase family. Type 1 subfamily. Homodimer.

Its subcellular location is the cytoplasm. The catalysed reaction is D-sedoheptulose 7-phosphate + D-glyceraldehyde 3-phosphate = D-erythrose 4-phosphate + beta-D-fructose 6-phosphate. It participates in carbohydrate degradation; pentose phosphate pathway; D-glyceraldehyde 3-phosphate and beta-D-fructose 6-phosphate from D-ribose 5-phosphate and D-xylulose 5-phosphate (non-oxidative stage): step 2/3. Its function is as follows. Transaldolase is important for the balance of metabolites in the pentose-phosphate pathway. This chain is Transaldolase B (talB), found in Pasteurella multocida (strain Pm70).